The primary structure comprises 153 residues: Histone H2B.4 (153 aa).

Basic and acidic residues-rich tracts occupy residues 1 to 10 (MAPKKDEKPA) and 20 to 54 (AKAE…GEKK). Residues 1–60 (MAPKKDEKPATAEAGAEAPAKAEAKPKAEKAAKKAKKEPSKKAAKEPKGDGEKKDKKKKK) form a disordered region. N6-acetyllysine is present on residues lysine 41 and lysine 42. Lysine 149 is covalently cross-linked (Glycyl lysine isopeptide (Lys-Gly) (interchain with G-Cter in ubiquitin)).

It belongs to the histone H2B family. In terms of assembly, the nucleosome is a histone octamer containing two molecules each of H2A, H2B, H3 and H4 assembled in one H3-H4 heterotetramer and two H2A-H2B heterodimers. The octamer wraps approximately 147 bp of DNA. The N-terminus is blocked. In terms of processing, can be acetylated to form H2BK33ac and H2BK34ac. Acetylated mainly on the ubiquitinated form. Post-translationally, monoubiquitinated to form H2BK143ub1; which is increased during the light period and may give a specific tag for epigenetic transcriptional activation.

Its subcellular location is the nucleus. The protein localises to the chromosome. Its function is as follows. Core component of nucleosome. Nucleosomes wrap and compact DNA into chromatin, limiting DNA accessibility to the cellular machineries which require DNA as a template. Histones thereby play a central role in transcription regulation, DNA repair, DNA replication and chromosomal stability. DNA accessibility is regulated via a complex set of post-translational modifications of histones, also called histone code, and nucleosome remodeling. The chain is Histone H2B.4 from Chlamydomonas reinhardtii (Chlamydomonas smithii).